We begin with the raw amino-acid sequence, 321 residues long: L-carnitine dehydrogenase (321 aa).

14-19 (GSGVIG) lines the NAD(+) pocket. The interval 317–321 (MTFSE) is important for catalytic activity.

This sequence belongs to the 3-hydroxyacyl-CoA dehydrogenase family. L-carnitine dehydrogenase subfamily. Homodimer.

The protein resides in the cytoplasm. The catalysed reaction is carnitine + NAD(+) = 3-dehydrocarnitine + NADH + H(+). The protein operates within amine and polyamine metabolism; carnitine metabolism. With respect to regulation, the enzyme activity is strongly inhibited by Ag(+), Ni(+), Hg(+), and p-chloromercuribenzoate, and partially inhibited by Li(+), Ca(2+), Mn(2+), Co(2+), Cu(2+), and Zn(2+). Functionally, catalyzes the NAD(+)-dependent oxidation of L-carnitine to 3-dehydrocarnitine. Is specific for L-carnitine and NAD(+) as substrates since D-carnitine, other carnitine analogs such as choline and betaine, and NADP(+) are not substrates. Despite a high similarity to 3-hydroxyacyl-CoA dehydrogenases, cannot dehydrogenate 3-hydroxybutylate and 3-hydroxybutyl-CoA. Is probably involved in a L-carnitine degradation pathway that allows Pseudomonas sp. strain NBRC 13558 to grow on L-carnitine as the sole source of carbon and nitrogen. The protein is L-carnitine dehydrogenase of Pseudomonas sp.